Here is a 243-residue protein sequence, read N- to C-terminus: Aldehyde decarbonylase (243 aa).

Fe cation is bound by residues Glu45, Glu73, His76, Glu128, and His160.

Belongs to the aldehyde decarbonylase family. Binds 2 metal cations per subunit. The catalytic dinuclear metal-binding site could be either a di-iron or a manganese-iron cofactor. is required as a cofactor.

The enzyme catalyses a long-chain fatty aldehyde + 2 NADPH + O2 + H(+) = a long-chain alkane + formate + 2 NADP(+) + H2O. Catalyzes the decarbonylation of fatty aldehydes to alkanes. Requires the presence of ferredoxin, ferredoxin reductase and NADPH for in vitro decarbonylase activity. Involved in the biosynthesis of alkanes, mainly heptadecane and pentadecane. In Prochlorococcus marinus (strain MIT 9313), this protein is Aldehyde decarbonylase.